The chain runs to 321 residues: D-alanine--D-alanine ligase (321 aa).

An ATP-grasp domain is found at 121–315 (RIWFLTNNIN…FTNLIEEIIK (195 aa)). 147-199 (PMKRPYVIKPLTQGSSIGVEVIFAEDDFNFADYDFPYGDQVIIEQYIKGRELQ) provides a ligand contact to ATP. The Mg(2+) site is built by Glu268, Glu282, and Asn284.

This sequence belongs to the D-alanine--D-alanine ligase family. It depends on Mg(2+) as a cofactor. The cofactor is Mn(2+).

It localises to the cytoplasm. It catalyses the reaction 2 D-alanine + ATP = D-alanyl-D-alanine + ADP + phosphate + H(+). Its pathway is cell wall biogenesis; peptidoglycan biosynthesis. In terms of biological role, cell wall formation. The polypeptide is D-alanine--D-alanine ligase (Rickettsia africae (strain ESF-5)).